The primary structure comprises 592 residues: Aspartate--tRNA(Asp/Asn) ligase (592 aa).

An L-aspartate-binding site is contributed by E177. The aspartate stretch occupies residues 201–204 (QIFK). L-aspartate-binding residues include R223 and H452. Residue 223–225 (RDE) coordinates ATP. E486 is a binding site for ATP. R493 contacts L-aspartate. An ATP-binding site is contributed by 538–541 (GIDR).

It belongs to the class-II aminoacyl-tRNA synthetase family. Type 1 subfamily. In terms of assembly, homodimer.

The protein localises to the cytoplasm. The catalysed reaction is tRNA(Asx) + L-aspartate + ATP = L-aspartyl-tRNA(Asx) + AMP + diphosphate. Functionally, aspartyl-tRNA synthetase with relaxed tRNA specificity since it is able to aspartylate not only its cognate tRNA(Asp) but also tRNA(Asn). Reaction proceeds in two steps: L-aspartate is first activated by ATP to form Asp-AMP and then transferred to the acceptor end of tRNA(Asp/Asn). The chain is Aspartate--tRNA(Asp/Asn) ligase from Anaplasma marginale (strain Florida).